The sequence spans 380 residues: Chaperone protein DnaJ (380 aa).

Positions 5 to 70 (DYYEVLGVER…SKRAAYDQYG (66 aa)) constitute a J domain. The CR-type zinc-finger motif lies at 139–217 (GTNVNIRVPT…CHGEGRVEES (79 aa)). The Zn(2+) site is built by Cys-152, Cys-155, Cys-169, Cys-172, Cys-191, Cys-194, Cys-205, and Cys-208. CXXCXGXG motif repeat units follow at residues 152–159 (CKPCDGSG), 169–176 (CPTCGGIG), 191–198 (CPRCHGHG), and 205–212 (CDSCHGEG). The interval 224 to 245 (VPPGVDTGDRIRLSGEGEAGTQ) is disordered.

This sequence belongs to the DnaJ family. In terms of assembly, homodimer. Zn(2+) serves as cofactor.

The protein resides in the cytoplasm. In terms of biological role, participates actively in the response to hyperosmotic and heat shock by preventing the aggregation of stress-denatured proteins and by disaggregating proteins, also in an autonomous, DnaK-independent fashion. Unfolded proteins bind initially to DnaJ; upon interaction with the DnaJ-bound protein, DnaK hydrolyzes its bound ATP, resulting in the formation of a stable complex. GrpE releases ADP from DnaK; ATP binding to DnaK triggers the release of the substrate protein, thus completing the reaction cycle. Several rounds of ATP-dependent interactions between DnaJ, DnaK and GrpE are required for fully efficient folding. Also involved, together with DnaK and GrpE, in the DNA replication of plasmids through activation of initiation proteins. In Pseudomonas syringae pv. syringae (strain B728a), this protein is Chaperone protein DnaJ.